A 411-amino-acid polypeptide reads, in one-letter code: Serine hydroxymethyltransferase (411 aa).

Residues L117 and 121 to 123 each bind (6S)-5,6,7,8-tetrahydrofolate; that span reads GHL. At K226 the chain carries N6-(pyridoxal phosphate)lysine. Residues E241 and 349–351 each bind (6S)-5,6,7,8-tetrahydrofolate; that span reads SPF.

Belongs to the SHMT family. In terms of assembly, homodimer. It depends on pyridoxal 5'-phosphate as a cofactor.

Its subcellular location is the cytoplasm. The enzyme catalyses (6R)-5,10-methylene-5,6,7,8-tetrahydrofolate + glycine + H2O = (6S)-5,6,7,8-tetrahydrofolate + L-serine. The protein operates within one-carbon metabolism; tetrahydrofolate interconversion. It functions in the pathway amino-acid biosynthesis; glycine biosynthesis; glycine from L-serine: step 1/1. Functionally, catalyzes the reversible interconversion of serine and glycine with tetrahydrofolate (THF) serving as the one-carbon carrier. This reaction serves as the major source of one-carbon groups required for the biosynthesis of purines, thymidylate, methionine, and other important biomolecules. Also exhibits THF-independent aldolase activity toward beta-hydroxyamino acids, producing glycine and aldehydes, via a retro-aldol mechanism. This is Serine hydroxymethyltransferase from Macrococcus caseolyticus (strain JCSC5402) (Macrococcoides caseolyticum).